A 545-amino-acid polypeptide reads, in one-letter code: Chaperonin GroEL (545 aa).

ATP-binding positions include 30–33 (TLGP), Lys-51, 87–91 (DGTTT), Gly-415, 479–481 (NAA), and Asp-495.

The protein belongs to the chaperonin (HSP60) family. As to quaternary structure, forms a cylinder of 14 subunits composed of two heptameric rings stacked back-to-back. Interacts with the co-chaperonin GroES.

The protein localises to the cytoplasm. It carries out the reaction ATP + H2O + a folded polypeptide = ADP + phosphate + an unfolded polypeptide.. Functionally, together with its co-chaperonin GroES, plays an essential role in assisting protein folding. The GroEL-GroES system forms a nano-cage that allows encapsulation of the non-native substrate proteins and provides a physical environment optimized to promote and accelerate protein folding. In Tolumonas auensis (strain DSM 9187 / NBRC 110442 / TA 4), this protein is Chaperonin GroEL.